We begin with the raw amino-acid sequence, 335 residues long: GTPase Obg (335 aa).

The Obg domain maps to 1 to 158 (MFLDQITIEL…RQVELELKLI (158 aa)). Positions 159–334 (ADIGLVGFPN…LNSLFTNRLS (176 aa)) constitute an OBG-type G domain. Residues 165–172 (GFPNAGKS), 190–194 (FTTLQ), 215–218 (DIPG), 285–288 (NKID), and 315–317 (SGL) contribute to the GTP site. Positions 172 and 192 each coordinate Mg(2+).

It belongs to the TRAFAC class OBG-HflX-like GTPase superfamily. OBG GTPase family. In terms of assembly, monomer. Mg(2+) serves as cofactor.

The protein resides in the cytoplasm. An essential GTPase which binds GTP, GDP and possibly (p)ppGpp with moderate affinity, with high nucleotide exchange rates and a fairly low GTP hydrolysis rate. Plays a role in control of the cell cycle, stress response, ribosome biogenesis and in those bacteria that undergo differentiation, in morphogenesis control. This chain is GTPase Obg, found in Chlamydia caviae (strain ATCC VR-813 / DSM 19441 / 03DC25 / GPIC) (Chlamydophila caviae).